A 118-amino-acid chain; its full sequence is Large ribosomal subunit protein uL24 (118 aa).

The protein belongs to the universal ribosomal protein uL24 family. As to quaternary structure, part of the 50S ribosomal subunit.

One of two assembly initiator proteins, it binds directly to the 5'-end of the 23S rRNA, where it nucleates assembly of the 50S subunit. In terms of biological role, one of the proteins that surrounds the polypeptide exit tunnel on the outside of the subunit. This is Large ribosomal subunit protein uL24 from Prochlorococcus marinus (strain MIT 9303).